Consider the following 144-residue polypeptide: Large-conductance mechanosensitive channel (144 aa).

2 consecutive transmembrane segments (helical) span residues 16–36 and 86–106; these read VIDL…VDSV and GNFL…FMMV.

This sequence belongs to the MscL family. Homopentamer.

It localises to the cell inner membrane. In terms of biological role, channel that opens in response to stretch forces in the membrane lipid bilayer. May participate in the regulation of osmotic pressure changes within the cell. This Cupriavidus metallidurans (strain ATCC 43123 / DSM 2839 / NBRC 102507 / CH34) (Ralstonia metallidurans) protein is Large-conductance mechanosensitive channel.